A 193-amino-acid chain; its full sequence is Putative nitroreductase HBN1 (193 aa).

S2 is modified (N-acetylserine).

It belongs to the nitroreductase family. FMN serves as cofactor.

It is found in the cytoplasm. The protein resides in the nucleus. The polypeptide is Putative nitroreductase HBN1 (HBN1) (Saccharomyces cerevisiae (strain ATCC 204508 / S288c) (Baker's yeast)).